The chain runs to 50 residues: uncharacterized protein (50 aa).

This is an uncharacterized protein from Dryophytes versicolor (chameleon treefrog).